Here is a 239-residue protein sequence, read N- to C-terminus: Ribonuclease PH (239 aa).

Phosphate contacts are provided by residues R87 and 125–127; that span reads GTR.

Belongs to the RNase PH family. In terms of assembly, homohexameric ring arranged as a trimer of dimers.

It catalyses the reaction tRNA(n+1) + phosphate = tRNA(n) + a ribonucleoside 5'-diphosphate. Functionally, phosphorolytic 3'-5' exoribonuclease that plays an important role in tRNA 3'-end maturation. Removes nucleotide residues following the 3'-CCA terminus of tRNAs; can also add nucleotides to the ends of RNA molecules by using nucleoside diphosphates as substrates, but this may not be physiologically important. Probably plays a role in initiation of 16S rRNA degradation (leading to ribosome degradation) during starvation. The protein is Ribonuclease PH of Dehalococcoides mccartyi (strain ATCC BAA-2266 / KCTC 15142 / 195) (Dehalococcoides ethenogenes (strain 195)).